The following is a 177-amino-acid chain: Isopentenyl-diphosphate Delta-isomerase (177 aa).

Mn(2+)-binding residues include His-22 and His-28. The 135-residue stretch at 26-160 folds into the Nudix hydrolase domain; it reads LRHMAISVFV…PERFTPWLRI (135 aa). Cys-62 is a catalytic residue. His-64 provides a ligand contact to Mn(2+). Glu-82 contributes to the Mg(2+) binding site. Glu-108 and Glu-110 together coordinate Mn(2+). The active site involves Glu-110.

This sequence belongs to the IPP isomerase type 1 family. It depends on Mg(2+) as a cofactor. Mn(2+) is required as a cofactor.

Its subcellular location is the cytoplasm. The enzyme catalyses isopentenyl diphosphate = dimethylallyl diphosphate. It participates in isoprenoid biosynthesis; dimethylallyl diphosphate biosynthesis; dimethylallyl diphosphate from isopentenyl diphosphate: step 1/1. The protein operates within porphyrin-containing compound metabolism; chlorophyll biosynthesis. Its function is as follows. Catalyzes the 1,3-allylic rearrangement of the homoallylic substrate isopentenyl (IPP) to its highly electrophilic allylic isomer, dimethylallyl diphosphate (DMAPP). The protein is Isopentenyl-diphosphate Delta-isomerase of Cereibacter sphaeroides (strain KD131 / KCTC 12085) (Rhodobacter sphaeroides).